The primary structure comprises 303 residues: Elongation factor Ts (303 aa).

The tract at residues 80–83 is involved in Mg(2+) ion dislocation from EF-Tu; that stretch reads TDFV.

This sequence belongs to the EF-Ts family.

The protein localises to the cytoplasm. Its function is as follows. Associates with the EF-Tu.GDP complex and induces the exchange of GDP to GTP. It remains bound to the aminoacyl-tRNA.EF-Tu.GTP complex up to the GTP hydrolysis stage on the ribosome. The sequence is that of Elongation factor Ts from Clostridium perfringens (strain ATCC 13124 / DSM 756 / JCM 1290 / NCIMB 6125 / NCTC 8237 / Type A).